Here is a 408-residue protein sequence, read N- to C-terminus: Argininosuccinate synthase (408 aa).

ATP-binding positions include Ala-11–Ser-19 and Ala-38. 2 residues coordinate L-citrulline: Tyr-91 and Ser-96. Gly-121 contributes to the ATP binding site. L-aspartate contacts are provided by Thr-123, Asn-127, and Asp-128. Asn-127 serves as a coordination point for L-citrulline. L-citrulline is bound by residues Arg-131, Ser-182, Ser-191, Glu-267, and Tyr-279.

The protein belongs to the argininosuccinate synthase family. Type 1 subfamily. Homotetramer.

It is found in the cytoplasm. The enzyme catalyses L-citrulline + L-aspartate + ATP = 2-(N(omega)-L-arginino)succinate + AMP + diphosphate + H(+). Its pathway is amino-acid biosynthesis; L-arginine biosynthesis; L-arginine from L-ornithine and carbamoyl phosphate: step 2/3. In Azorhizobium caulinodans (strain ATCC 43989 / DSM 5975 / JCM 20966 / LMG 6465 / NBRC 14845 / NCIMB 13405 / ORS 571), this protein is Argininosuccinate synthase.